The primary structure comprises 446 residues: Probable D-serine dehydratase (446 aa).

Position 116 is an N6-(pyridoxal phosphate)lysine (lysine 116).

This sequence belongs to the serine/threonine dehydratase family. DsdA subfamily. The cofactor is pyridoxal 5'-phosphate.

It carries out the reaction D-serine = pyruvate + NH4(+). The protein is Probable D-serine dehydratase of Bacillus thuringiensis (strain Al Hakam).